The sequence spans 457 residues: Equilibrative nucleoside transporter 1 (457 aa).

The Cytoplasmic portion of the chain corresponds to 1 to 12 (MTTSHQPQDRYK). The chain crosses the membrane as a helical span at residues 13 to 29 (AVWLIFFVLGLGTLLPW). At 30-82 (NFFITATQYFTSRLNTSQNISLVTNQSCESTEALADPSVSLPARSSLSAIFNN) the chain is on the extracellular side. N-linked (GlcNAc...) asparagine glycosylation is found at Asn44, Asn48, and Asn54. A helical transmembrane segment spans residues 83 to 107 (VMTLCAMLPLLIFTCLNSFLHQKVS). Residues 108–111 (QSLR) are Cytoplasmic-facing. The helical transmembrane segment at 112–130 (ILGSLLAILLVFLVTATLV) threads the bilayer. Over 131–138 (KVQMDALS) the chain is Extracellular. A helical transmembrane segment spans residues 139–157 (FFIITMIKIVLINSFGAIL). Residues 158–174 (QASLFGLAGVLPANYTA) are Cytoplasmic-facing. The helical transmembrane segment at 175–199 (PIMSGQGLAGFFTSVAMICAVASGS) threads the bilayer. Over 200–206 (KLSESAF) the chain is Extracellular. Residues 207 to 227 (GYFITACAVVILAILCYLALP) traverse the membrane as a helical segment. The Cytoplasmic segment spans residues 228-291 (WMEFYRHYLQ…IKAILKSIWV (64 aa)). Ser254 is subject to Phosphoserine. A compositionally biased stretch (basic and acidic residues) spans 255–266 (EGEEPRGGREES). The tract at residues 255 to 275 (EGEEPRGGREESGVPGPNSLP) is disordered. Residue Ser273 is modified to Phosphoserine. A helical membrane pass occupies residues 292–311 (LALSVCFIFTVTIGLFPAVT). The Extracellular portion of the chain corresponds to 312–323 (AEVESSIAGTSP). Residues 324 to 343 (WKNCYFIPVACFLNFNVFDW) form a helical membrane-spanning segment. Residues 344 to 360 (LGRSLTAICMWPGQDSR) lie on the Cytoplasmic side of the membrane. The helical transmembrane segment at 361 to 379 (WLPVLVACRVVFIPLLMLC) threads the bilayer. Residues 380–394 (NVKQHHYLPSLFKHD) are Extracellular-facing. A helical transmembrane segment spans residues 395-414 (VWFITFMAAFAFSNGYLASL). The Cytoplasmic segment spans residues 415 to 432 (CMCFGPKKVKPAEAETAG). A helical transmembrane segment spans residues 433 to 453 (NIMSFFLCLGLALGAVLSFLL). Residues 454–457 (RALV) lie on the Extracellular side of the membrane.

Belongs to the SLC29A/ENT transporter (TC 2.A.57) family. Identified in a complex with STOM. Expressed in jejunum, liver and lung. Expressed in testis at the blood-testis barrier (at protein level). Expressed in ventricular myocytes (at protein level). Expressed in kidney.

The protein resides in the basolateral cell membrane. It localises to the apical cell membrane. Its subcellular location is the cell membrane. The catalysed reaction is adenosine(in) = adenosine(out). It catalyses the reaction guanosine(in) = guanosine(out). The enzyme catalyses inosine(in) = inosine(out). It carries out the reaction uridine(out) = uridine(in). The catalysed reaction is thymidine(in) = thymidine(out). It catalyses the reaction cytidine(in) = cytidine(out). The enzyme catalyses adenine(out) = adenine(in). It carries out the reaction guanine(out) = guanine(in). The catalysed reaction is thymine(out) = thymine(in). It catalyses the reaction uracil(in) = uracil(out). The enzyme catalyses hypoxanthine(out) = hypoxanthine(in). With respect to regulation, transport activity is sensitive to low concentrations of the inhibitor nitrobenzylmercaptopurine riboside (NBMPR). In terms of biological role, uniporter involved in the facilitative transport of nucleosides and nucleobases, and contributes to maintaining their cellular homeostasis. Functions as a Na(+)-independent transporter. Involved in the transport of nucleosides such as adenosine, thymidine and uridine. Also transports purine nucleobases (hypoxanthine, adenine, guanine) and pyrimidine nucleobases (thymine, uracil). Mediates basolateral nucleoside uptake into Sertoli cells, thereby regulating the transport of nucleosides in testis across the blood-testis barrier. Regulates inosine levels in brown adipocytes tissues (BAT) and extracellular inosine levels, which controls BAT-dependent energy expenditure. The polypeptide is Equilibrative nucleoside transporter 1 (Rattus norvegicus (Rat)).